A 276-amino-acid chain; its full sequence is AT-hook motif nuclear-localized protein 17 (276 aa).

The span at Met1–Ser10 shows a compositional bias: basic and acidic residues. Disordered regions lie at residues Met1–Asp80 and Ala212–Glu248. Composition is skewed to low complexity over residues His20 to His31 and Ser40 to Asp49. Residues Arg56 to Lys68 constitute a DNA-binding region (a.T hook). Residues Asp80 to Pro230 enclose the PPC domain. Residues Ala212–Gly227 show a composition bias toward basic and acidic residues. Gly residues predominate over residues Ser233–Glu248.

It localises to the nucleus. Transcription factor that specifically binds AT-rich DNA sequences related to the nuclear matrix attachment regions (MARs). This is AT-hook motif nuclear-localized protein 17 from Arabidopsis thaliana (Mouse-ear cress).